The following is a 236-amino-acid chain: Segregation and condensation protein A (236 aa).

It belongs to the ScpA family. As to quaternary structure, component of a cohesin-like complex composed of ScpA, ScpB and the Smc homodimer, in which ScpA and ScpB bind to the head domain of Smc. The presence of the three proteins is required for the association of the complex with DNA.

It is found in the cytoplasm. Its function is as follows. Participates in chromosomal partition during cell division. May act via the formation of a condensin-like complex containing Smc and ScpB that pull DNA away from mid-cell into both cell halves. In Streptococcus sanguinis (strain SK36), this protein is Segregation and condensation protein A.